Consider the following 535-residue polypeptide: Alcohol O-acetyltransferase 2 (535 aa).

Residues 19–36 (GHARRMGHLENYFAVLSR) are membrane association. Catalysis depends on charge relay system residues histidine 189 and aspartate 193. A membrane association region spans residues 515–532 (RGEWESFCKLFYQTIGEF).

This sequence belongs to the ATF1 alcohol acetyltransferase family.

It localises to the lipid droplet. The protein localises to the endoplasmic reticulum membrane. It catalyses the reaction an aliphatic alcohol + acetyl-CoA = an acetyl ester + CoA. Functionally, can use acetyl-CoA to synthesize acetate esters from various alcohols, producing ethyl acetate, isoamyl acetate, isobutyl acetate, butyl acetate, hexyl acetate, heptyl acetate and octyl acetate. ATF2 seems to play only a minor role in the acetate ester synthesis, compared to ATF1. Plays an active role in the detoxification hydroxysteroids and possibly certain phytochemicals, in association with the efflux pumps PDR5 and SNQ2. The chain is Alcohol O-acetyltransferase 2 from Saccharomyces cerevisiae (strain ATCC 204508 / S288c) (Baker's yeast).